Here is a 683-residue protein sequence, read N- to C-terminus: Phenoloxidase 3 (683 aa).

A propeptide spanning residues 1-48 (MADKKNLLLLFDHPTEPVFMDKGGNGTVFDVPDSYVTDRYNQMCKKVQ) is cleaved from the precursor. Cu cation is bound by residues His-209, His-213, and His-239. Glu-351 functions as the Proton acceptor in the catalytic mechanism. An N-linked (GlcNAc...) asparagine glycan is attached at Asn-358. The Cu cation site is built by His-366, His-370, and His-406. 2 N-linked (GlcNAc...) asparagine glycosylation sites follow: Asn-492 and Asn-546. Cystine bridges form between Cys-574/Cys-617 and Cys-576/Cys-624.

It belongs to the tyrosinase family. The cofactor is Cu(2+). In terms of processing, upon activation, a trypsin type protease cleaves prophenol oxidase to yield the active enzyme.

The protein localises to the secreted. The enzyme catalyses 2 L-dopa + O2 = 2 L-dopaquinone + 2 H2O. It catalyses the reaction L-tyrosine + O2 = L-dopaquinone + H2O. Functionally, this is a copper-containing oxidase that functions in the formation of pigments such as melanins and other polyphenolic compounds. Catalyzes the rate-limiting conversions of tyrosine to DOPA, DOPA to DOPA-quinone and possibly 5,6 dihydroxyindole to indole-5'6 quinone. This Drosophila melanogaster (Fruit fly) protein is Phenoloxidase 3 (PPO3).